We begin with the raw amino-acid sequence, 268 residues long: Tryptophan synthase alpha chain (268 aa).

Residues E49 and D60 each act as proton acceptor in the active site.

The protein belongs to the TrpA family. As to quaternary structure, tetramer of two alpha and two beta chains.

The enzyme catalyses (1S,2R)-1-C-(indol-3-yl)glycerol 3-phosphate + L-serine = D-glyceraldehyde 3-phosphate + L-tryptophan + H2O. It functions in the pathway amino-acid biosynthesis; L-tryptophan biosynthesis; L-tryptophan from chorismate: step 5/5. The alpha subunit is responsible for the aldol cleavage of indoleglycerol phosphate to indole and glyceraldehyde 3-phosphate. The polypeptide is Tryptophan synthase alpha chain (Vibrio parahaemolyticus serotype O3:K6 (strain RIMD 2210633)).